We begin with the raw amino-acid sequence, 448 residues long: Tumor necrosis factor receptor superfamily member EDAR (448 aa).

Positions 1–26 (MAHVGDCTQTPWLPVLVVSLMCSARA) are cleaved as a signal peptide. At 27 to 187 (EYSNCGENEY…LSGQGHLATA (161 aa)) the chain is on the extracellular side. TNFR-Cys repeat units follow at residues 30–71 (NCGE…DYGC), 73–113 (PCPA…DAEC), and 115–148 (PCLPGYYMLENRPRNIYGMVCYSCLLAPPNTKEC). 6 cysteine pairs are disulfide-bonded: C31–C44, C47–C60, C50–C71, C74–C87, C93–C113, and C135–C148. N-linked (GlcNAc...) asparagine glycosylation is present at N38. A helical transmembrane segment spans residues 188 to 208 (LIIAMSTIFIMAIAIVLIIMF). Residues 209–448 (YILKTKPSAP…PPASQPHAAS (240 aa)) lie on the Cytoplasmic side of the membrane. The interval 220 to 297 (CCTSHPGKSV…EEPAPDKQGS (78 aa)) is disordered. The segment covering 233–243 (VSKDEEKKEAP) has biased composition (basic and acidic residues). The segment covering 271-283 (DASSENEQLLSRS) has biased composition (polar residues). One can recognise a Death domain in the interval 358–431 (RMLSSTYNSE…DAVESLCADI (74 aa)).

Binds to EDARADD. Associates with TRAF1, TRAF2, TRAF3 and NIK. As to expression, detected in fetal kidney, lung, skin and cultured neonatal epidermal keratinocytes. Not detected in lymphoblast and fibroblast cell lines.

It localises to the membrane. Its function is as follows. Receptor for EDA isoform A1, but not for EDA isoform A2. Mediates the activation of NF-kappa-B and JNK. May promote caspase-independent cell death. This is Tumor necrosis factor receptor superfamily member EDAR (EDAR) from Homo sapiens (Human).